Reading from the N-terminus, the 72-residue chain is Large ribosomal subunit protein uL29 (72 aa).

This sequence belongs to the universal ribosomal protein uL29 family.

The polypeptide is Large ribosomal subunit protein uL29 (Prochlorococcus marinus (strain AS9601)).